Reading from the N-terminus, the 1032-residue chain is Y' element ATP-dependent helicase YPR204W (1032 aa).

Residues 1–175 enclose the Helicase ATP-binding domain; that stretch reads MADTPSVAVQ…LQRIGLTGLA (175 aa). 11-18 provides a ligand contact to ATP; it reads APPGYGKT. The DEAH box motif lies at 121-124; it reads DEFH. The Helicase C-terminal domain maps to 232-381; it reads KLLLALFEIE…EFYGLESKKG (150 aa). A compositionally biased stretch (low complexity) spans 455–634; the sequence is ANASTNATTN…ATTTESTNAS (180 aa). Residues 455–658 form a disordered region; sequence ANASTNATTN…RFHPVTDINK (204 aa). Positions 635–658 are enriched in basic and acidic residues; that stretch reads AKEDANKDGNAEDNRFHPVTDINK.

It belongs to the helicase family. Yeast subtelomeric Y' repeat subfamily.

In terms of biological role, catalyzes DNA unwinding and is involved in telomerase-independent telomere maintenance. This chain is Y' element ATP-dependent helicase YPR204W, found in Saccharomyces cerevisiae (strain ATCC 204508 / S288c) (Baker's yeast).